A 172-amino-acid polypeptide reads, in one-letter code: MTELFDTAVTSLLHLPEVLDRLGAAAGDRRSAGDHAHHAAHGHGQHRISGIGGGAPVDIMETPGEYAFVLDVPGLSKSDIQVTLEEDRVLVMKSSNGAGNGKRKREEEEGECKYIRLERRASPRAFARKFRLPEDADTGGISARCENGVLTVTVKKRPPPEKKTKSVQVTIA.

Residues Arg-29–Gly-54 form a disordered region. The sHSP domain occupies Ile-48–Ala-172.

The protein belongs to the small heat shock protein (HSP20) family. May form oligomeric structures.

The protein localises to the cytoplasm. This Oryza sativa subsp. japonica (Rice) protein is 18.6 kDa class III heat shock protein (HSP18.6).